Here is a 152-residue protein sequence, read N- to C-terminus: Small ribosomal subunit protein uS8m (152 aa).

Belongs to the universal ribosomal protein uS8 family.

The protein resides in the mitochondrion. The polypeptide is Small ribosomal subunit protein uS8m (mrps8) (Dictyostelium discoideum (Social amoeba)).